The following is a 254-amino-acid chain: Putative epimerase LsrE (254 aa).

A helical transmembrane segment spans residues 14 to 34; sequence VALLASYPLSVGILAGQWIAL. Residues H50, D52, and H81 each contribute to the a divalent metal cation site. D52 functions as the Proton acceptor in the catalytic mechanism. Residues H81, 166–169, 199–201, and 221–222 contribute to the substrate site; these read GYGS, DGS, and GS. D199 is an a divalent metal cation binding site. D199 serves as the catalytic Proton donor.

The protein belongs to the ribulose-phosphate 3-epimerase family. The cofactor is a divalent metal cation.

Its subcellular location is the cell membrane. This is Putative epimerase LsrE (lsrE) from Salmonella typhi.